The chain runs to 792 residues: Xaa-Pro dipeptidyl-peptidase (792 aa).

Catalysis depends on charge relay system residues Ser-363, Asp-482, and His-513.

It belongs to the peptidase S15 family. As to quaternary structure, homodimer.

It localises to the cytoplasm. The catalysed reaction is Hydrolyzes Xaa-Pro-|- bonds to release unblocked, N-terminal dipeptides from substrates including Ala-Pro-|-p-nitroanilide and (sequentially) Tyr-Pro-|-Phe-Pro-|-Gly-Pro-|-Ile.. In terms of biological role, removes N-terminal dipeptides sequentially from polypeptides having unsubstituted N-termini provided that the penultimate residue is proline. The polypeptide is Xaa-Pro dipeptidyl-peptidase (Lactobacillus delbrueckii subsp. bulgaricus (strain ATCC BAA-365 / Lb-18)).